We begin with the raw amino-acid sequence, 316 residues long: Large ribosomal subunit protein uL10 (316 aa).

The segment at 282–316 is disordered; the sequence is ASAAKADEPKKEEAKKVEEEEEEEEDGFMGFGMFD. The segment covering 286-299 has biased composition (basic and acidic residues); it reads KADEPKKEEAKKVE.

It belongs to the universal ribosomal protein uL10 family. P0 forms a pentameric complex by interaction with dimers of P1 and P2. Post-translationally, phosphorylated.

Functionally, ribosomal protein P0 is the functional equivalent of E.coli protein L10. In Plasmodium falciparum (isolate 7G8), this protein is Large ribosomal subunit protein uL10 (RPLP0).